The sequence spans 918 residues: Hexokinase-1 (918 aa).

Methionine 1 carries the post-translational modification N-acetylmethionine. The tract at residues 1 to 10 is mitochondrial-binding peptide (MBP); that stretch reads MIAAQLLAYY. 2 Hexokinase domains span residues 16 to 458 and 464 to 906; these read DDQV…MVTA and AEQH…LITA. ATP contacts are provided by residues arginine 30 and 84–89; that span reads DLGGSS. The interval 73–207 is hexokinase small subdomain 1; that stretch reads DGSEKGDFIA…DYDANIVAVV (135 aa). 84–91 serves as a coordination point for D-glucose 6-phosphate; the sequence is DLGGSSFR. Residues serine 155, 172-173, and 208-209 contribute to the D-glucose site; these read TK and ND. A hexokinase large subdomain 1 region spans residues 208-447; sequence NDTVGTMIDC…SDVRFLLSES (240 aa). The D-glucose 6-phosphate site is built by aspartate 209 and threonine 232. D-glucose is bound by residues asparagine 235, glutamate 260, and 291–294; that span reads QRFE. Residue serine 337 is modified to Phosphoserine. 413 to 415 lines the D-glucose 6-phosphate pocket; that stretch reads DGS. Residues 425-426 and 532-537 contribute to the ATP site; these read RR and DLGGTN. The segment at 521-655 is hexokinase small subdomain 2; it reads DGTEDGDFLA…EFDLDVVAVV (135 aa). A D-glucose 6-phosphate-binding site is contributed by 532 to 536; that stretch reads DLGGT. D-glucose-binding positions include 603–604, 620–621, and 656–657; these read SF, TK, and ND. Positions 656 to 895 are hexokinase large subdomain 2; the sequence is NDTVGTMMTC…CNVSFLLSED (240 aa). The D-glucose 6-phosphate site is built by aspartate 657 and threonine 680. Threonine 680 lines the ATP pocket. D-glucose-binding positions include 682–683, glutamate 708, and glutamate 742; that span reads SN. ATP-binding positions include 747-748, 784-788, and 863-867; these read GI, TKFLS, and TLYKL. Residues 861 to 863 and serine 897 each bind D-glucose 6-phosphate; that span reads DGT.

Belongs to the hexokinase family. Monomer. Interacts with RABL2/RABL2A; binds preferentially to GTP-bound RABL2. Interacts with VDAC1. The HK1-VDAC1 complex interacts with ATF2. Interacts (via N-terminal spermatogenic cell-specific region) with PFKM (via C-terminus). Interacts with SMAD5.

It is found in the mitochondrion outer membrane. The protein localises to the cytoplasm. The protein resides in the cytosol. The enzyme catalyses a D-hexose + ATP = a D-hexose 6-phosphate + ADP + H(+). The catalysed reaction is D-fructose + ATP = D-fructose 6-phosphate + ADP + H(+). It carries out the reaction D-glucose + ATP = D-glucose 6-phosphate + ADP + H(+). It catalyses the reaction D-mannose + ATP = D-mannose 6-phosphate + ADP + H(+). The enzyme catalyses D-glucosamine + ATP = D-glucosamine 6-phosphate + ADP + H(+). Its pathway is carbohydrate metabolism; hexose metabolism. It participates in carbohydrate degradation; glycolysis; D-glyceraldehyde 3-phosphate and glycerone phosphate from D-glucose: step 1/4. With respect to regulation, hexokinase is an allosteric enzyme inhibited by its product D-glucose 6-phosphate. Hexokinase activity is inhibited by N-acetyl-D-glucosamine. In terms of biological role, catalyzes the phosphorylation of various hexoses, such as D-glucose, D-glucosamine, D-fructose, D-mannose and 2-deoxy-D-glucose, to hexose 6-phosphate (D-glucose 6-phosphate, D-glucosamine 6-phosphate, D-fructose 6-phosphate, D-mannose 6-phosphate and 2-deoxy-D-glucose 6-phosphate, respectively). Does not phosphorylate N-acetyl-D-glucosamine. Mediates the initial step of glycolysis by catalyzing phosphorylation of D-glucose to D-glucose 6-phosphate. Involved in innate immunity and inflammation by acting as a pattern recognition receptor for bacterial peptidoglycan. When released in the cytosol, N-acetyl-D-glucosamine component of bacterial peptidoglycan inhibits the hexokinase activity of HK1 and causes its dissociation from mitochondrial outer membrane, thereby activating the NLRP3 inflammasome. This is Hexokinase-1 from Bos taurus (Bovine).